Consider the following 227-residue polypeptide: NMTVFRLNRDCTFPHPKHAESDGLLAVGGDLSAKRLINGYRDGIFPWYSEGDPILWWYTHPRFVIYPDRFTAGKRLMRYWKKTSYTFTIDQAFSQVIGLCGSSRTGRGEETWILPEMREAYGQLHELGYAHSVECWDVDRLVGGLYGVELGGVFFGESMFSTVSNSSKFCLIYLVEQARKRGVQLIDCQMTTRHLLQFGAVEISGEKFYQHLQLLIADIGPQPAWKI.

It belongs to the L/F-transferase family.

The protein resides in the cytoplasm. It catalyses the reaction N-terminal L-lysyl-[protein] + L-leucyl-tRNA(Leu) = N-terminal L-leucyl-L-lysyl-[protein] + tRNA(Leu) + H(+). The enzyme catalyses N-terminal L-arginyl-[protein] + L-leucyl-tRNA(Leu) = N-terminal L-leucyl-L-arginyl-[protein] + tRNA(Leu) + H(+). It carries out the reaction L-phenylalanyl-tRNA(Phe) + an N-terminal L-alpha-aminoacyl-[protein] = an N-terminal L-phenylalanyl-L-alpha-aminoacyl-[protein] + tRNA(Phe). Functionally, functions in the N-end rule pathway of protein degradation where it conjugates Leu, Phe and, less efficiently, Met from aminoacyl-tRNAs to the N-termini of proteins containing an N-terminal arginine or lysine. This Desulfotalea psychrophila (strain LSv54 / DSM 12343) protein is Leucyl/phenylalanyl-tRNA--protein transferase.